A 1052-amino-acid chain; its full sequence is MASQPSSLKKKEEKGRNIQVVVRCRPFNLAERKANAHSVVECDHARKEVSVRTAGLTDKTSKKTYTFDMVFGASTKQIDVYRSVVCPILDEVIMGYNCTIFAYGQTGTGKTFTMEGERSPNEVYTWEEDPLAGIIPRTLHQIFEKLTDNGTEFSVKVSLLEIYNEELFDLLSPSSDVSERLQMFDDPRNKRGVIIKGLEEITVHNKDEVYQILEKGAAKRTTAATLMNAYSSRSHSVFSVTIHMKETTIDGEELVKIGKLNLVDLAGSENIGRSGAVDKRAREAGNINQSLLTLGRVITALVERTPHIPYRESKLTRILQDSLGGRTRTSIIATISPASFNLEETLSTLEYAHRAKNIMNKPEVNQKLTKKALIKEYTEEIERLKRDLAAAREKNGVYISEESFRAMNGKVTVQEEQIVELVEKIAVLEEELSKATELFMDSKNELDQCKSDLQTKTQELETTQKHLQETKLQLVKEEYVSSALERTEKTLHDTASKLLNTVKETTRAVSGLHSKLDRKRAIDEHNAEAQESFGKNLNSLFNNMEELIKDGSAKQKAMLDVHKTLFGNLMSSSVSALDTITTTALESLVSIPENVSARVSQISDMILEEQSLAAQSKSVLQGLIDELVTDLFTSLKTIVAPSVVSILNINKQLQHIFRASSTVAEKVEDQKREIDSFLSILCNNLHELRENTVSSLVESQKLCGDLTEDLKTIKETHSQELCQLSSSWAERFCALEKKYENIQKPLNSIQENTELRSTDIINKTTVHSKKILAESDGLLQELRHFNQEGTQLVEESVGHCSSLNSNLETVSQEITQKCGTLNTSTVHFSDQWASCLSKRKEELENLMEFVNGCCKASSSEITKKVREQSAAVANQHSSFVAQMTSDEESCKAGSLELDKTIKTGLTKLNCFLKQDLKLDIPTGMTPERKKYLYPTTLVRTEPREQLLDQLQKKQPPMMLNSSEASKETSQDMDEEREALEQCTEELVSPETTEHPSADCSSSRGLPFFQRKKPHGKDKENRGLNPVEKYKVEEASDLSISKSRLPLHTSINL.

The Kinesin motor domain maps to 17-358 (NIQVVVRCRP…LEYAHRAKNI (342 aa)). 104–111 (GQTGTGKT) is a binding site for ATP. K145 bears the N6-acetyllysine mark. Residues 364-478 (VNQKLTKKAL…ETKLQLVKEE (115 aa)) are a coiled coil. T457 is modified (phosphothreonine). A Glycyl lysine isopeptide (Lys-Gly) (interchain with G-Cter in SUMO2) cross-link involves residue K476. The residue at position 925 (T925) is a Phosphothreonine. 2 disordered regions span residues 950-1026 (LQKK…LNPV) and 1033-1052 (EASDLSISKSRLPLHTSINL). Residues 963–988 (EASKETSQDMDEEREALEQCTEELVS) adopt a coiled-coil conformation. Positions 1016-1026 (KDKENRGLNPV) are enriched in basic and acidic residues.

The protein belongs to the TRAFAC class myosin-kinesin ATPase superfamily. Kinesin family. BimC subfamily. As to quaternary structure, interacts with the thyroid hormone receptor in the presence of thyroid hormone. Component of a large chromatin remodeling complex, at least composed of MYSM1, PCAF, RBM10 and KIF11/TRIP5. Interacts with RARRES1 and AGBL2. Post-translationally, phosphorylated exclusively on serine during S phase, but on both serine and Thr-925 during mitosis, so controlling the association of KIF11 with the spindle apparatus (probably during early prophase).

The protein resides in the cytoplasm. It localises to the cytoskeleton. The protein localises to the spindle pole. Its function is as follows. Motor protein required for establishing a bipolar spindle during mitosis. Required in non-mitotic cells for transport of secretory proteins from the Golgi complex to the cell surface. The sequence is that of Kinesin-like protein KIF11 (Kif11) from Mus musculus (Mouse).